The sequence spans 121 residues: RxLR effector protein PexRD2 (121 aa).

A signal peptide spans 1-20; it reads MRLSYVIVVIATSFLVTTEA. The short motif at 38–56 is the RxLR-dEER element; it reads RLLRKHYTAAENDDDSEAR. The segment at 57 to 121 is WY domain; sequence ALNTEKMKTM…LNYVAEHTAV (65 aa).

It belongs to the RxLR effector family. Homodimer. Interacts with host MAPKKK epsilon (via its kinase domain).

The protein localises to the secreted. Its subcellular location is the host cytoplasm. The protein resides in the host nucleus. In terms of biological role, effector that enhances P.infestans colonization of Nicotiana benthamiana leaves. Induces a weak Cell death response in N.benthamiana. PexRD2-induced cell death is dependent on SGT1, suggesting that PexRD2 is recognized by the plant immune system. Interacts with the kinase domain of the host MAPKKK epsilon, a positive regulator of cell death associated with plant immunity, and perturbs signaling pathways triggered by MAPKKK epsilon. The polypeptide is RxLR effector protein PexRD2 (Phytophthora infestans (strain T30-4) (Potato late blight agent)).